Reading from the N-terminus, the 473-residue chain is Trehalose-6-phosphate synthase (473 aa).

Arginine 10 serves as a coordination point for D-glucose 6-phosphate. Glycine 21 to glycine 22 provides a ligand contact to UDP-alpha-D-glucose. D-glucose 6-phosphate contacts are provided by tyrosine 76 and aspartate 130. 2 residues coordinate UDP-alpha-D-glucose: arginine 262 and lysine 267. A D-glucose 6-phosphate-binding site is contributed by arginine 300. Residues phenylalanine 339 and leucine 365 to glutamate 369 each bind UDP-alpha-D-glucose. The tract at residues threonine 454–alanine 473 is disordered.

Belongs to the glycosyltransferase 20 family. As to quaternary structure, homotetramer.

The enzyme catalyses D-glucose 6-phosphate + UDP-alpha-D-glucose = alpha,alpha-trehalose 6-phosphate + UDP + H(+). The protein operates within glycan biosynthesis; trehalose biosynthesis. In terms of biological role, probably involved in the osmoprotection via the biosynthesis of trehalose. Catalyzes the transfer of glucose from UDP-alpha-D-glucose (UDP-Glc) to D-glucose 6-phosphate (Glc-6-P) to form trehalose-6-phosphate. Acts with retention of the anomeric configuration of the UDP-sugar donor. This is Trehalose-6-phosphate synthase from Salmonella paratyphi A (strain ATCC 9150 / SARB42).